A 224-amino-acid polypeptide reads, in one-letter code: Lipoprotein-releasing system ATP-binding protein LolD (224 aa).

Residues Leu-6–Ile-224 enclose the ABC transporter domain. Residue Gly-43–Thr-50 coordinates ATP.

It belongs to the ABC transporter superfamily. Lipoprotein translocase (TC 3.A.1.125) family. The complex is composed of two ATP-binding proteins (LolD) and two transmembrane proteins (LolC and LolE).

Its subcellular location is the cell inner membrane. In terms of biological role, part of the ABC transporter complex LolCDE involved in the translocation of mature outer membrane-directed lipoproteins, from the inner membrane to the periplasmic chaperone, LolA. Responsible for the formation of the LolA-lipoprotein complex in an ATP-dependent manner. This Neorickettsia sennetsu (strain ATCC VR-367 / Miyayama) (Ehrlichia sennetsu) protein is Lipoprotein-releasing system ATP-binding protein LolD.